We begin with the raw amino-acid sequence, 47 residues long: Large ribosomal subunit protein bL34 (47 aa).

It belongs to the bacterial ribosomal protein bL34 family.

This chain is Large ribosomal subunit protein bL34 (rpmH), found in Mycolicibacterium smegmatis (strain ATCC 700084 / mc(2)155) (Mycobacterium smegmatis).